The primary structure comprises 128 residues: Lymphocyte antigen 6D (128 aa).

Residues 1-20 form the signal peptide; that stretch reads MRTALLLLAALAVATGPALT. The 88-residue stretch at 21–108 folds into the UPAR/Ly6 domain; sequence LRCHVCTSSS…AAPTRTALAH (88 aa). Cystine bridges form between Cys-23/Cys-45, Cys-26/Cys-32, Cys-38/Cys-63, Cys-67/Cys-86, and Cys-87/Cys-92. Asn-98 carries GPI-anchor amidated asparagine lipidation. A propeptide spans 99–128 (removed in mature form); sequence AAPTRTALAHSALSLGLALSLLAVILAPSL.

Expressed exclusively at the outer cell surface of transitional epithelia and the keratinocyte of stratified squamous epithelia.

It localises to the cell membrane. May act as a specification marker at earliest stage specification of lymphocytes between B- and T-cell development. Marks the earliest stage of B-cell specification. The chain is Lymphocyte antigen 6D (LY6D) from Homo sapiens (Human).